The following is a 238-amino-acid chain: Uridylate kinase (238 aa).

13 to 16 contacts ATP; the sequence is KLSG. G53 provides a ligand contact to UMP. ATP-binding residues include G54 and R58. Residues D73 and 134 to 141 contribute to the UMP site; that span reads AGLPYFST. 3 residues coordinate ATP: N162, Y168, and D171.

This sequence belongs to the UMP kinase family. In terms of assembly, homohexamer.

The protein localises to the cytoplasm. It carries out the reaction UMP + ATP = UDP + ADP. It participates in pyrimidine metabolism; CTP biosynthesis via de novo pathway; UDP from UMP (UMPK route): step 1/1. With respect to regulation, inhibited by UTP. Its function is as follows. Catalyzes the reversible phosphorylation of UMP to UDP. The sequence is that of Uridylate kinase from Clavibacter michiganensis subsp. michiganensis (strain NCPPB 382).